A 206-amino-acid polypeptide reads, in one-letter code: Small ribosomal subunit protein uS4c (206 aa).

2 stretches are compositionally biased toward basic residues: residues 1–13 (MSRY…RITR) and 25–34 (QSKKKGRPGQ). Positions 1-50 (MSRYRGPKLRITRRLGALPGLTQKQSKKKGRPGQHGKSNEADNSKKTTEY) are disordered. Basic and acidic residues predominate over residues 37 to 50 (KSNEADNSKKTTEY). The 63-residue stretch at 95–157 (MRLDTICFTL…ATSKNLVEGN (63 aa)) folds into the S4 RNA-binding domain.

It belongs to the universal ribosomal protein uS4 family. Part of the 30S ribosomal subunit. Contacts protein S5. The interaction surface between S4 and S5 is involved in control of translational fidelity.

Its subcellular location is the plastid. The protein resides in the chloroplast. In terms of biological role, one of the primary rRNA binding proteins, it binds directly to 16S rRNA where it nucleates assembly of the body of the 30S subunit. With S5 and S12 plays an important role in translational accuracy. The chain is Small ribosomal subunit protein uS4c (rps4) from Trieres chinensis (Marine centric diatom).